A 193-amino-acid chain; its full sequence is Ribonuclease HII (193 aa).

Residues 15–193 (YIVAGVDEAG…SYHRRSFKSC (179 aa)) form the RNase H type-2 domain. Aspartate 21, glutamate 22, and aspartate 112 together coordinate a divalent metal cation.

This sequence belongs to the RNase HII family. It depends on Mn(2+) as a cofactor. Mg(2+) is required as a cofactor.

It is found in the cytoplasm. It carries out the reaction Endonucleolytic cleavage to 5'-phosphomonoester.. Endonuclease that specifically degrades the RNA of RNA-DNA hybrids. This is Ribonuclease HII (rnhB) from Rickettsia prowazekii (strain Madrid E).